The following is a 116-amino-acid chain: Large ribosomal subunit protein bL17 (116 aa).

This sequence belongs to the bacterial ribosomal protein bL17 family. As to quaternary structure, part of the 50S ribosomal subunit. Contacts protein L32.

This chain is Large ribosomal subunit protein bL17, found in Synechococcus elongatus (strain ATCC 33912 / PCC 7942 / FACHB-805) (Anacystis nidulans R2).